A 254-amino-acid polypeptide reads, in one-letter code: Peptide methionine sulfoxide reductase A5 (254 aa).

The signal sequence occupies residues 1-33; sequence MAISLKRNRFFIPYTNLVFFFFLCVSLLDKTVS.

This sequence belongs to the MsrA Met sulfoxide reductase family.

It catalyses the reaction L-methionyl-[protein] + [thioredoxin]-disulfide + H2O = L-methionyl-(S)-S-oxide-[protein] + [thioredoxin]-dithiol. The catalysed reaction is [thioredoxin]-disulfide + L-methionine + H2O = L-methionine (S)-S-oxide + [thioredoxin]-dithiol. In terms of biological role, catalyzes the reduction of methionine sulfoxide (MetSO) to methionine in proteins. Plays a protective role against oxidative stress by restoring activity to proteins that have been inactivated by methionine oxidation. MSRA family specifically reduces the MetSO S-enantiomer. The chain is Peptide methionine sulfoxide reductase A5 (MSRA5) from Arabidopsis thaliana (Mouse-ear cress).